We begin with the raw amino-acid sequence, 285 residues long: Isoprenyl transferase 2 (285 aa).

The segment at 11 to 30 is disordered; sequence RREYRAPEPHPSGARAPKLP. Residue Asp43 is part of the active site. Asp43 lines the Mg(2+) pocket. Residues 44–47, Trp48, Arg56, His60, and 88–90 each bind substrate; these read GNGR and STE. Asn91 functions as the Proton acceptor in the catalytic mechanism. Residues Trp92, Arg94, Arg211, and 217 to 219 each bind substrate; that span reads RTS. Residue Glu230 participates in Mg(2+) binding.

Belongs to the UPP synthase family. Homodimer. Requires Mg(2+) as cofactor.

Functionally, catalyzes the condensation of isopentenyl diphosphate (IPP) with allylic pyrophosphates generating different type of terpenoids. The sequence is that of Isoprenyl transferase 2 from Streptomyces avermitilis (strain ATCC 31267 / DSM 46492 / JCM 5070 / NBRC 14893 / NCIMB 12804 / NRRL 8165 / MA-4680).